The sequence spans 58 residues: uncharacterized protein (58 aa).

It is found in the plastid. Its subcellular location is the chloroplast. This is an uncharacterized protein from Porphyra purpurea (Red seaweed).